The following is a 162-amino-acid chain: MIRFAQYARYPVISRLMKPTVISPFQAQAFSSSSVMLKTLNQTIRNKEKRPEKTNKQSVALEGSPFRRGVCTRVFTVKPKKPNSAVRKVARVRLSTGRSVTAYIPGIGHNAQEHAVVLLRGGRAQDCPGVQYHVVRGVYDIAGVAGRVTSRSKYGVKKPKAA.

A mitochondrion-targeting transit peptide spans 1 to 37 (MIRFAQYARYPVISRLMKPTVISPFQAQAFSSSSVML).

It belongs to the universal ribosomal protein uS12 family. As to quaternary structure, component of the mitochondrial small ribosomal subunit (mt-SSU). Mature yeast 74S mitochondrial ribosomes consist of a small (37S) and a large (54S) subunit. The 37S small subunit contains a 15S ribosomal RNA (15S mt-rRNA) and at least 32 different proteins. The 54S large subunit contains a 21S rRNA (21S mt-rRNA) and at least 45 different proteins. uS12m forms part of the decoding center of the mt-SSU.

It is found in the mitochondrion. In terms of biological role, component of the mitochondrial ribosome (mitoribosome), a dedicated translation machinery responsible for the synthesis of mitochondrial genome-encoded proteins, including at least some of the essential transmembrane subunits of the mitochondrial respiratory chain. The mitoribosomes are attached to the mitochondrial inner membrane and translation products are cotranslationally integrated into the membrane. uS12m is required for respiratory growth. This is Small ribosomal subunit protein uS12m from Schizosaccharomyces pombe (strain 972 / ATCC 24843) (Fission yeast).